Reading from the N-terminus, the 558-residue chain is 2-isopropylmalate synthase (558 aa).

Residues 31 to 306 (PIWCAVDLRD…DPGIDFSNID (276 aa)) enclose the Pyruvate carboxyltransferase domain. D40, H245, H247, and N281 together coordinate Mg(2+). Residues 440–558 (AGSPYSFLEH…LCAANHLSDK (119 aa)) form a regulatory domain region.

It belongs to the alpha-IPM synthase/homocitrate synthase family. LeuA type 2 subfamily. As to quaternary structure, homodimer. Mg(2+) is required as a cofactor.

The protein resides in the cytoplasm. It catalyses the reaction 3-methyl-2-oxobutanoate + acetyl-CoA + H2O = (2S)-2-isopropylmalate + CoA + H(+). Its pathway is amino-acid biosynthesis; L-leucine biosynthesis; L-leucine from 3-methyl-2-oxobutanoate: step 1/4. Its function is as follows. Catalyzes the condensation of the acetyl group of acetyl-CoA with 3-methyl-2-oxobutanoate (2-ketoisovalerate) to form 3-carboxy-3-hydroxy-4-methylpentanoate (2-isopropylmalate). This Rhodospirillum rubrum (strain ATCC 11170 / ATH 1.1.1 / DSM 467 / LMG 4362 / NCIMB 8255 / S1) protein is 2-isopropylmalate synthase.